The following is a 209-amino-acid chain: NAD(P)H-quinone oxidoreductase subunit N, chloroplastic (209 aa).

A chloroplast-targeting transit peptide spans 1-45 (MGSRAICIQRVAPPCFEASQVKKIKTVGSFLVNTRSKRRRSTGVK).

The protein belongs to the NDH complex subunit N family. Part of the chloroplast NDH complex, composed of a mixture of chloroplast and nucleus encoded subunits. Component of the NDH subcomplex A, at least composed of ndhH, ndhI, ndhJ, ndhK, ndhL, ndhM, ndhN and ndhO.

It localises to the plastid. It is found in the chloroplast thylakoid membrane. It catalyses the reaction a plastoquinone + NADH + (n+1) H(+)(in) = a plastoquinol + NAD(+) + n H(+)(out). It carries out the reaction a plastoquinone + NADPH + (n+1) H(+)(in) = a plastoquinol + NADP(+) + n H(+)(out). Its function is as follows. NDH shuttles electrons from NAD(P)H:plastoquinone, via FMN and iron-sulfur (Fe-S) centers, to quinones in the photosynthetic chain and possibly in a chloroplast respiratory chain. The immediate electron acceptor for the enzyme in this species is believed to be plastoquinone. Couples the redox reaction to proton translocation, and thus conserves the redox energy in a proton gradient. The sequence is that of NAD(P)H-quinone oxidoreductase subunit N, chloroplastic from Arabidopsis thaliana (Mouse-ear cress).